The chain runs to 327 residues: Probable cell division protein WhiA (327 aa).

A DNA-binding region (H-T-H motif) is located at residues 275–308 (SLEELGRLADPQMTKDAVAGRIRRLLTMADKRAE).

Belongs to the WhiA family.

Functionally, involved in cell division and chromosome segregation. This is Probable cell division protein WhiA from Corynebacterium glutamicum (strain R).